We begin with the raw amino-acid sequence, 426 residues long: D-tagatose-1,6-bisphosphate aldolase subunit KbaZ (426 aa).

This sequence belongs to the GatZ/KbaZ family. KbaZ subfamily. As to quaternary structure, forms a complex with KbaY.

The protein operates within carbohydrate metabolism; D-tagatose 6-phosphate degradation; D-glyceraldehyde 3-phosphate and glycerone phosphate from D-tagatose 6-phosphate: step 2/2. Component of the tagatose-1,6-bisphosphate aldolase KbaYZ that is required for full activity and stability of the Y subunit. Could have a chaperone-like function for the proper and stable folding of KbaY. When expressed alone, KbaZ does not show any aldolase activity. This chain is D-tagatose-1,6-bisphosphate aldolase subunit KbaZ, found in Escherichia coli (strain 55989 / EAEC).